A 674-amino-acid polypeptide reads, in one-letter code: DNA-directed RNA polymerase subunit beta' (674 aa).

4 residues coordinate Zn(2+): cysteine 69, cysteine 71, cysteine 87, and cysteine 90. Mg(2+) is bound by residues aspartate 494, aspartate 496, and aspartate 498.

The protein belongs to the RNA polymerase beta' chain family. RpoC1 subfamily. In terms of assembly, in plastids the minimal PEP RNA polymerase catalytic core is composed of four subunits: alpha, beta, beta', and beta''. When a (nuclear-encoded) sigma factor is associated with the core the holoenzyme is formed, which can initiate transcription. Mg(2+) is required as a cofactor. It depends on Zn(2+) as a cofactor.

It localises to the plastid. It is found in the chloroplast. The enzyme catalyses RNA(n) + a ribonucleoside 5'-triphosphate = RNA(n+1) + diphosphate. Its function is as follows. DNA-dependent RNA polymerase catalyzes the transcription of DNA into RNA using the four ribonucleoside triphosphates as substrates. The protein is DNA-directed RNA polymerase subunit beta' of Psilotum nudum (Whisk fern).